The chain runs to 550 residues: Mitochondrial distribution and morphology protein 12 (550 aa).

One can recognise an SMP-LTD domain in the interval Met-1–Val-550. Disordered regions lie at residues Ile-62–Leu-168, Pro-218–Arg-356, and Thr-474–Thr-493. Residues Phe-69 to Asp-90 show a composition bias toward acidic residues. Over residues Val-125–Arg-140 the composition is skewed to low complexity. 4 stretches are compositionally biased toward polar residues: residues Pro-148–Thr-157, Pro-251–Ser-269, Thr-278–Thr-289, and Val-296–Glu-323.

It belongs to the MDM12 family. As to quaternary structure, component of the ER-mitochondria encounter structure (ERMES) or MDM complex, composed of MMM1, MDM10, MDM12 and MDM34. An MMM1 homodimer associates with one molecule of MDM12 on each side in a pairwise head-to-tail manner, and the SMP-LTD domains of MMM1 and MDM12 generate a continuous hydrophobic tunnel for phospholipid trafficking.

Its subcellular location is the mitochondrion outer membrane. It localises to the endoplasmic reticulum membrane. Its function is as follows. Component of the ERMES/MDM complex, which serves as a molecular tether to connect the endoplasmic reticulum (ER) and mitochondria. Components of this complex are involved in the control of mitochondrial shape and protein biogenesis, and function in nonvesicular lipid trafficking between the ER and mitochondria. MDM12 is required for the interaction of the ER-resident membrane protein MMM1 and the outer mitochondrial membrane-resident beta-barrel protein MDM10. The MDM12-MMM1 subcomplex functions in the major beta-barrel assembly pathway that is responsible for biogenesis of all mitochondrial outer membrane beta-barrel proteins, and acts in a late step after the SAM complex. The MDM10-MDM12-MMM1 subcomplex further acts in the TOM40-specific pathway after the action of the MDM12-MMM1 complex. Essential for establishing and maintaining the structure of mitochondria and maintenance of mtDNA nucleoids. This chain is Mitochondrial distribution and morphology protein 12, found in Pyricularia oryzae (strain 70-15 / ATCC MYA-4617 / FGSC 8958) (Rice blast fungus).